The chain runs to 452 residues: uncharacterized protein (452 aa).

Helical transmembrane passes span 8 to 28 (AVFL…SSMI), 39 to 59 (FHLS…ASAV), 77 to 97 (FLFG…APTF), 100 to 122 (LLVM…VGLI), 134 to 156 (LAVL…GFLI), 161 to 183 (WPAI…LYMF), 203 to 222 (LGIV…LLSF), 226 to 243 (PHAV…AFVW), 266 to 286 (AVYV…FGLP), 302 to 322 (LFML…GKWI), 330 to 350 (PIFA…IFFI), 359 to 379 (LILS…QAAM), 393 to 415 (GLFQ…ILFG), and 425 to 447 (MMGI…FAAL).

The protein belongs to the major facilitator superfamily.

The protein localises to the cell membrane. This is an uncharacterized protein from Bacillus subtilis (strain 168).